A 212-amino-acid polypeptide reads, in one-letter code: ATP-dependent dethiobiotin synthetase BioD (212 aa).

13-18 (GVGKTV) lines the ATP pocket. Thr17 provides a ligand contact to Mg(2+). Residue Lys33 is part of the active site. Mg(2+) is bound at residue Glu100. ATP is bound by residues 100–103 (EGAG) and 184–186 (PHL).

It belongs to the dethiobiotin synthetase family. In terms of assembly, homodimer. It depends on Mg(2+) as a cofactor.

The protein resides in the cytoplasm. The enzyme catalyses (7R,8S)-7,8-diammoniononanoate + CO2 + ATP = (4R,5S)-dethiobiotin + ADP + phosphate + 3 H(+). The protein operates within cofactor biosynthesis; biotin biosynthesis; biotin from 7,8-diaminononanoate: step 1/2. Catalyzes a mechanistically unusual reaction, the ATP-dependent insertion of CO2 between the N7 and N8 nitrogen atoms of 7,8-diaminopelargonic acid (DAPA, also called 7,8-diammoniononanoate) to form a ureido ring. The sequence is that of ATP-dependent dethiobiotin synthetase BioD from Rhodopseudomonas palustris (strain BisB5).